A 1015-amino-acid chain; its full sequence is DNA polymerase catalytic subunit (1015 aa).

Belongs to the DNA polymerase type-B family. In terms of assembly, forms a complex with the major DNA-binding protein BALF2, the DNA polymerase processivity factor BMRF1, and the alkaline exonuclease BGLF5. Interacts with the putative helicase-primase complex composed of BBLF4, BSLF1 and BBLF2/3 proteins; these interactions may coordinate leading and lagging strand DNA synthesis at the replication fork.

It localises to the host nucleus. It catalyses the reaction DNA(n) + a 2'-deoxyribonucleoside 5'-triphosphate = DNA(n+1) + diphosphate. Functionally, replicates viral genomic DNA in the late phase of lytic infection, producing long concatemeric DNA. The replication complex is composed of six viral proteins: the DNA polymerase, processivity factor, primase, primase-associated factor, helicase, and ssDNA-binding protein. The protein is DNA polymerase catalytic subunit of Homo sapiens (Human).